A 355-amino-acid polypeptide reads, in one-letter code: MPSSQAQADLWRHTLYYLTSMGLRCAVKLGIPTAIHNLGGVSSLPDLAAALSIPASKQPFLGRLMRALVTSGVFANGKERLLGGLFRLNPLSRILVEGVVAEEHHSQTSFVLAGTSRHYMEAALGMADWFKKDATGPVPTVFEDVHSASLFDESTAALDPELDALVTEGLAAHDNLGIGTIIREFHDLFKGLVSLTDFCCGDGTTSRAITKAHPHVKFTVLDLPKVIDKTPSDGIVNYFAGDLFHTVPKAQAVMLKLVLHHLSYEDCFKILTQCKDAIPSREEGGKVIVIDIVVAPSLGQVMFKEQTLMDILMLVFTRGRQRSENNWHELFTKAGFSDYKIVKKLGARGVIEVYK.

S-adenosyl-L-homocysteine is bound by residues aspartate 222, aspartate 242, and lysine 256. The active-site Proton acceptor is the histidine 260.

It belongs to the class I-like SAM-binding methyltransferase superfamily. Cation-independent O-methyltransferase family. COMT subfamily.

The enzyme catalyses 7,8-dihydroxycoumarin + S-adenosyl-L-methionine = 7-hydroxy-8-methoxycoumarin + S-adenosyl-L-homocysteine + H(+). Its pathway is aromatic compound metabolism. It functions in the pathway secondary metabolite biosynthesis. Its function is as follows. O-methyltransferase involved in the biosynthesis of coumarins natural products such as daphnetin derivatives. Catalyzes specifically the methylation of daphnetin (7,8-dihydroxycoumarin) to produce hydrangetin (7-hydroxy-8-methoxycoumarin). Probably involved in acclimation to low temperature conditions. The polypeptide is Daphnetin O-methyltransferase 1 (Secale cereale (Rye)).